Reading from the N-terminus, the 469-residue chain is Ribulose bisphosphate carboxylase large chain (469 aa).

Residue K7 is modified to N6,N6,N6-trimethyllysine. 2 residues coordinate substrate: N116 and T166. K168 (proton acceptor) is an active-site residue. K170 is a binding site for substrate. Residues K194, D196, and E197 each contribute to the Mg(2+) site. K194 carries the N6-carboxylysine modification. The Proton acceptor role is filled by H287. The substrate site is built by R288, H320, and S372.

Belongs to the RuBisCO large chain family. Type I subfamily. As to quaternary structure, heterohexadecamer of 8 large chains and 8 small chains; disulfide-linked. The disulfide link is formed within the large subunit homodimers. Requires Mg(2+) as cofactor. In terms of processing, the disulfide bond which can form in the large chain dimeric partners within the hexadecamer appears to be associated with oxidative stress and protein turnover.

The protein localises to the plastid. Its subcellular location is the chloroplast. The catalysed reaction is 2 (2R)-3-phosphoglycerate + 2 H(+) = D-ribulose 1,5-bisphosphate + CO2 + H2O. The enzyme catalyses D-ribulose 1,5-bisphosphate + O2 = 2-phosphoglycolate + (2R)-3-phosphoglycerate + 2 H(+). Functionally, ruBisCO catalyzes two reactions: the carboxylation of D-ribulose 1,5-bisphosphate, the primary event in carbon dioxide fixation, as well as the oxidative fragmentation of the pentose substrate in the photorespiration process. Both reactions occur simultaneously and in competition at the same active site. The protein is Ribulose bisphosphate carboxylase large chain of Pachira aquatica (Guiana chestnut).